Here is a 1392-residue protein sequence, read N- to C-terminus: L-2-aminoadipate reductase (1392 aa).

K541 is covalently cross-linked (Glycyl lysine isopeptide (Lys-Gly) (interchain with G-Cter in ubiquitin)). Positions 843-920 (SQFTNVEREV…AFAAEIDRIK (78 aa)) constitute a Carrier domain. The residue at position 880 (S880) is an O-(pantetheine 4'-phosphoryl)serine. Residue K1276 forms a Glycyl lysine isopeptide (Lys-Gly) (interchain with G-Cter in ubiquitin) linkage.

This sequence belongs to the ATP-dependent AMP-binding enzyme family. Requires pantetheine 4'-phosphate as cofactor.

It carries out the reaction (S)-2-amino-6-oxohexanoate + NADP(+) + H2O = L-2-aminoadipate + NADPH + 2 H(+). The catalysed reaction is (S)-2-amino-6-oxohexanoate + NAD(+) + H2O = L-2-aminoadipate + NADH + 2 H(+). It catalyses the reaction (S)-2-amino-6-oxohexanoate + AMP + diphosphate + NADP(+) = L-2-aminoadipate + ATP + NADPH + H(+). The protein operates within amino-acid biosynthesis; L-lysine biosynthesis via AAA pathway; L-lysine from L-alpha-aminoadipate (fungal route): step 1/3. Functionally, catalyzes the activation of alpha-aminoadipate by ATP-dependent adenylation and the reduction of activated alpha-aminoadipate by NADPH. The activated alpha-aminoadipate is bound to the phosphopantheinyl group of the enzyme itself before it is reduced to (S)-2-amino-6-oxohexanoate. The chain is L-2-aminoadipate reductase (LYS2) from Saccharomyces cerevisiae (strain ATCC 204508 / S288c) (Baker's yeast).